Reading from the N-terminus, the 443-residue chain is UPF0597 protein DVU_0440 (443 aa).

Belongs to the UPF0597 family.

The protein is UPF0597 protein DVU_0440 of Nitratidesulfovibrio vulgaris (strain ATCC 29579 / DSM 644 / CCUG 34227 / NCIMB 8303 / VKM B-1760 / Hildenborough) (Desulfovibrio vulgaris).